A 443-amino-acid polypeptide reads, in one-letter code: ATP-dependent protease ATPase subunit HslU (443 aa).

Residues Val18 and 60-65 contribute to the ATP site; that span reads GVGKTE. The segment at 136–158 is disordered; it reads LPPPRDFNEDSQRTNADSSTRQL. A compositionally biased stretch (polar residues) spans 148–157; it reads RTNADSSTRQ. Positions 256, 321, and 393 each coordinate ATP.

The protein belongs to the ClpX chaperone family. HslU subfamily. A double ring-shaped homohexamer of HslV is capped on each side by a ring-shaped HslU homohexamer. The assembly of the HslU/HslV complex is dependent on binding of ATP.

Its subcellular location is the cytoplasm. Functionally, ATPase subunit of a proteasome-like degradation complex; this subunit has chaperone activity. The binding of ATP and its subsequent hydrolysis by HslU are essential for unfolding of protein substrates subsequently hydrolyzed by HslV. HslU recognizes the N-terminal part of its protein substrates and unfolds these before they are guided to HslV for hydrolysis. In Marinobacter nauticus (strain ATCC 700491 / DSM 11845 / VT8) (Marinobacter aquaeolei), this protein is ATP-dependent protease ATPase subunit HslU.